A 343-amino-acid chain; its full sequence is Sodium/bile acid cotransporter 7-B (343 aa).

The Cytoplasmic segment spans residues 1 to 9; the sequence is MGLLERLRK. Residues 10 to 30 traverse the membrane as a helical segment; the sequence is EWFIIGIILVIVAAKLEPTIG. At 31-37 the chain is on the extracellular side; that stretch reads EKGGPLK. A helical transmembrane segment spans residues 38 to 58; the sequence is PEITITYIAVSAIFFNSGLSL. At 59-71 the chain is on the cytoplasmic side; that stretch reads KTEELTNALMHVK. A helical membrane pass occupies residues 72–92; that stretch reads LHLFVQLFTLVFFPTAIWIFL. Residues 93–116 lie on the Extracellular side of the membrane; that stretch reads QVLSLTPINEWLLKGLQTVSCMPP. Residues 117 to 137 traverse the membrane as a helical segment; it reads PVSSAVILTKAVGGNEAAAIF. Asparagine 138 is a topological domain (cytoplasmic). A helical membrane pass occupies residues 139-159; that stretch reads SAFGSFLGIVVTPLLLLLFLG. Residues 160-163 are Extracellular-facing; sequence SSSS. The chain crosses the membrane as a helical span at residues 164-184; the sequence is VPFTSIFSQLFMTVVVPLIIG. Residues 185-201 lie on the Cytoplasmic side of the membrane; that stretch reads QIVRRYIKDWLERKKPP. Residues 202–222 traverse the membrane as a helical segment; it reads FGAISSCVLLMIIYTTFCDTF. The Extracellular segment spans residues 223-234; the sequence is SNPNIDLDTFSL. A helical transmembrane segment spans residues 235–255; the sequence is VVIVFIIFFIQLAFMLLTFLF. Residues 256–270 are Cytoplasmic-facing; the sequence is STSKNSGFTPADTVA. The helical transmembrane segment at 271 to 291 threads the bilayer; that stretch reads IVFCSTHKSLTLGIPMLKIVF. At 292 to 298 the chain is on the extracellular side; that stretch reads AGYEHLS. The helical transmembrane segment at 299–319 threads the bilayer; the sequence is LISVPLLIYHPAQILLGSVLV. Topologically, residues 320–343 are cytoplasmic; that stretch reads PTIKSWMLSRRKALKLTRQPKIPL.

It belongs to the bile acid:sodium symporter (BASS) (TC 2.A.28) family.

The protein resides in the cell membrane. Its subcellular location is the endoplasmic reticulum membrane. It is found in the golgi apparatus membrane. Functionally, involved in teeth and skeletal development. Has an essential role in the biosynthesis and trafficking of glycosaminoglycans and glycoproteins to produce a proper functioning extracellular matrix. Required for extracellular matrix mineralization. Also involved in the regulation of cellular calcium homeostasis. Does not show transport activity towards bile acids or steroid sulfates. This is Sodium/bile acid cotransporter 7-B (slc10a7-b) from Xenopus laevis (African clawed frog).